A 70-amino-acid polypeptide reads, in one-letter code: DNA gyrase inhibitor YacG (70 aa).

Cys7, Cys10, Cys26, and Cys30 together coordinate Zn(2+).

It belongs to the DNA gyrase inhibitor YacG family. As to quaternary structure, interacts with GyrB. The cofactor is Zn(2+).

Functionally, inhibits all the catalytic activities of DNA gyrase by preventing its interaction with DNA. Acts by binding directly to the C-terminal domain of GyrB, which probably disrupts DNA binding by the gyrase. The chain is DNA gyrase inhibitor YacG from Shewanella woodyi (strain ATCC 51908 / MS32).